Reading from the N-terminus, the 227-residue chain is Orotidine 5'-phosphate decarboxylase (227 aa).

Substrate is bound by residues Asp-12, Lys-34, 61 to 70 (DLKLHDIPNT), Thr-117, Arg-178, Gln-187, Gly-207, and Arg-208. Lys-63 serves as the catalytic Proton donor.

The protein belongs to the OMP decarboxylase family. Type 1 subfamily. Homodimer.

It carries out the reaction orotidine 5'-phosphate + H(+) = UMP + CO2. It participates in pyrimidine metabolism; UMP biosynthesis via de novo pathway; UMP from orotate: step 2/2. In terms of biological role, catalyzes the decarboxylation of orotidine 5'-monophosphate (OMP) to uridine 5'-monophosphate (UMP). This chain is Orotidine 5'-phosphate decarboxylase, found in Anaeromyxobacter sp. (strain K).